The primary structure comprises 691 residues: Elongation factor G (691 aa).

Residues 8-283 (EDYRNFGIMA…AVVDYLPSPA (276 aa)) form the tr-type G domain. Residues 17 to 24 (AHIDAGKT), 81 to 85 (DTPGH), and 135 to 138 (NKMD) each bind GTP.

Belongs to the TRAFAC class translation factor GTPase superfamily. Classic translation factor GTPase family. EF-G/EF-2 subfamily.

It localises to the cytoplasm. In terms of biological role, catalyzes the GTP-dependent ribosomal translocation step during translation elongation. During this step, the ribosome changes from the pre-translocational (PRE) to the post-translocational (POST) state as the newly formed A-site-bound peptidyl-tRNA and P-site-bound deacylated tRNA move to the P and E sites, respectively. Catalyzes the coordinated movement of the two tRNA molecules, the mRNA and conformational changes in the ribosome. This chain is Elongation factor G, found in Methylobacterium sp. (strain 4-46).